The chain runs to 610 residues: UvrABC system protein C (610 aa).

Residues 16-94 (SQPGVYRMYD…IKLYQPRYNV (79 aa)) enclose the GIY-YIG domain. In terms of domain architecture, UVR spans 204 to 239 (DQVLTQLISRMETASQNLEFEEAARIRDQIQAVRRV).

The protein belongs to the UvrC family. As to quaternary structure, interacts with UvrB in an incision complex.

The protein resides in the cytoplasm. In terms of biological role, the UvrABC repair system catalyzes the recognition and processing of DNA lesions. UvrC both incises the 5' and 3' sides of the lesion. The N-terminal half is responsible for the 3' incision and the C-terminal half is responsible for the 5' incision. This chain is UvrABC system protein C, found in Escherichia coli O1:K1 / APEC.